The primary structure comprises 216 residues: Transmembrane protein 163a (216 aa).

At 1 to 15 the chain is on the cytoplasmic side; sequence MRLKPHEAQSYRKKA. The helical transmembrane segment at 16 to 36 threads the bilayer; that stretch reads LWVSWISIVVTLILAVAGFTV. Residues 37–43 are Extracellular-facing; sequence SFMRHSA. A helical transmembrane segment spans residues 44–64; it reads SAFGFAFDATLDVLSSIIVLW. Over 65-77 the chain is Cytoplasmic; the sequence is RYSNAAAVHSAHR. A helical transmembrane segment spans residues 78 to 98; sequence EYIACVILGVIFILSSLCILG. The Extracellular segment spans residues 99–114; it reads KAIHDLATKLLPEVDD. Residues 115–135 form a helical membrane-spanning segment; it reads FLFSVSIVSGLMCVILAVAKF. Residues 136–144 lie on the Cytoplasmic side of the membrane; it reads MLGRILTSR. Residues 145 to 165 traverse the membrane as a helical segment; sequence ALITDGFNSMVGGIMGFSILI. At 166–182 the chain is on the extracellular side; the sequence is SAEVFRHYPNVWYLDGT. A helical transmembrane segment spans residues 183-203; sequence IGILIGLVIQAYGVKLLVDMI. Residues 204 to 216 lie on the Cytoplasmic side of the membrane; it reads PRVRQTRNYERFE.

This sequence belongs to the TMEM163 family.

The protein resides in the cytoplasmic vesicle. Its subcellular location is the secretory vesicle. It localises to the synaptic vesicle membrane. The protein localises to the early endosome membrane. It is found in the late endosome membrane. The protein resides in the lysosome membrane. Its subcellular location is the cell membrane. The enzyme catalyses Zn(2+)(in) = Zn(2+)(out). In terms of biological role, zinc ion transporter that mediates zinc efflux and plays a crucial role in intracellular zinc homeostasis. Binds the divalent cations Zn(2+), Ni(2+), and to a minor extent Cu(2+). Is a functional modulator of P2X purinoceptors, including P2RX1, P2RX3, P2RX4 and P2RX7. Plays a role in central nervous system development and is required for myelination, and survival and proliferation of oligodendrocytes. This Danio rerio (Zebrafish) protein is Transmembrane protein 163a.